Consider the following 517-residue polypeptide: ATP synthase subunit alpha (517 aa).

174–181 (GDRQTGKT) serves as a coordination point for ATP.

This sequence belongs to the ATPase alpha/beta chains family. F-type ATPases have 2 components, CF(1) - the catalytic core - and CF(0) - the membrane proton channel. CF(1) has five subunits: alpha(3), beta(3), gamma(1), delta(1), epsilon(1). CF(0) has three main subunits: a(1), b(2) and c(9-12). The alpha and beta chains form an alternating ring which encloses part of the gamma chain. CF(1) is attached to CF(0) by a central stalk formed by the gamma and epsilon chains, while a peripheral stalk is formed by the delta and b chains.

The protein resides in the cell inner membrane. The enzyme catalyses ATP + H2O + 4 H(+)(in) = ADP + phosphate + 5 H(+)(out). In terms of biological role, produces ATP from ADP in the presence of a proton gradient across the membrane. The alpha chain is a regulatory subunit. This is ATP synthase subunit alpha from Delftia acidovorans (strain DSM 14801 / SPH-1).